A 381-amino-acid chain; its full sequence is 2-epi-5-epi-valiolone synthase (381 aa).

NAD(+)-binding positions include Asp50, 81 to 84 (EEAK), 114 to 118 (GIVLD), 138 to 139 (TS), Lys151, Lys160, and 178 to 181 (FLDT). Residue Lys151 is part of the active site. Residues Glu193, His264, and His280 each coordinate a divalent metal cation.

It belongs to the sugar phosphate cyclases superfamily. EEVS family. NAD(+) serves as cofactor. Requires Co(2+) as cofactor.

It catalyses the reaction D-sedoheptulose 7-phosphate = 2-epi-5-epi-valiolone + phosphate. It participates in antibiotic biosynthesis. Functionally, catalyzes the cyclization of D-sedoheptulose 7-phosphate to 2-epi-5-epi-valiolone. Involved in cetoniacytone A biosynthesis. In Actinomyces sp, this protein is 2-epi-5-epi-valiolone synthase.